Consider the following 185-residue polypeptide: Elongation factor P (185 aa).

The protein belongs to the elongation factor P family.

It localises to the cytoplasm. Its pathway is protein biosynthesis; polypeptide chain elongation. Its function is as follows. Involved in peptide bond synthesis. Stimulates efficient translation and peptide-bond synthesis on native or reconstituted 70S ribosomes in vitro. Probably functions indirectly by altering the affinity of the ribosome for aminoacyl-tRNA, thus increasing their reactivity as acceptors for peptidyl transferase. This Burkholderia multivorans (strain ATCC 17616 / 249) protein is Elongation factor P.